The sequence spans 206 residues: Small ribosomal subunit protein uS4 (206 aa).

An S4 RNA-binding domain is found at 96–158; sequence GRLDNVVYRM…AKQQSRIKAA (63 aa).

Belongs to the universal ribosomal protein uS4 family. Part of the 30S ribosomal subunit. Contacts protein S5. The interaction surface between S4 and S5 is involved in control of translational fidelity.

One of the primary rRNA binding proteins, it binds directly to 16S rRNA where it nucleates assembly of the body of the 30S subunit. Functionally, with S5 and S12 plays an important role in translational accuracy. This is Small ribosomal subunit protein uS4 from Aliivibrio fischeri (strain ATCC 700601 / ES114) (Vibrio fischeri).